The sequence spans 525 residues: GMP synthase [glutamine-hydrolyzing] (525 aa).

In terms of domain architecture, Glutamine amidotransferase type-1 spans 8-207; that stretch reads KILILDFGSQ…ALDICGCAAN (200 aa). Residue C85 is the Nucleophile of the active site. Active-site residues include H181 and E183. The GMPS ATP-PPase domain occupies 208–400; it reads WKPSSIIEDA…LGLPYNMLYR (193 aa). 235–241 provides a ligand contact to ATP; the sequence is SGGVDSS.

In terms of assembly, homodimer.

The catalysed reaction is XMP + L-glutamine + ATP + H2O = GMP + L-glutamate + AMP + diphosphate + 2 H(+). The protein operates within purine metabolism; GMP biosynthesis; GMP from XMP (L-Gln route): step 1/1. Its function is as follows. Catalyzes the synthesis of GMP from XMP. This Shewanella baltica (strain OS155 / ATCC BAA-1091) protein is GMP synthase [glutamine-hydrolyzing].